The primary structure comprises 130 residues: Small ribosomal subunit protein uS8 (130 aa).

This sequence belongs to the universal ribosomal protein uS8 family. As to quaternary structure, part of the 30S ribosomal subunit.

Its function is as follows. One of the primary rRNA binding proteins, it binds directly to 16S rRNA central domain where it helps coordinate assembly of the platform of the 30S subunit. This chain is Small ribosomal subunit protein uS8, found in Pyrococcus abyssi (strain GE5 / Orsay).